We begin with the raw amino-acid sequence, 306 residues long: Transcription initiation factor IIB (306 aa).

2 repeat units span residues asparagine 122–leucine 205 and aspartate 216–glutamine 297.

The protein belongs to the TFIIB family.

Stabilizes TBP binding to an archaeal box-A promoter. Also responsible for recruiting RNA polymerase II to the pre-initiation complex (DNA-TBP-TFIIB). This is Transcription initiation factor IIB from Saccharolobus shibatae (strain ATCC 51178 / DSM 5389 / JCM 8931 / NBRC 15437 / B12) (Sulfolobus shibatae).